We begin with the raw amino-acid sequence, 233 residues long: Glucosamine-6-phosphate deaminase (233 aa).

Catalysis depends on aspartate 62, which acts as the Proton acceptor; for enolization step. The active-site For ring-opening step is the asparagine 128. The active-site Proton acceptor; for ring-opening step is the histidine 130. Glutamate 135 acts as the For ring-opening step in catalysis.

It belongs to the glucosamine/galactosamine-6-phosphate isomerase family. NagB subfamily.

The enzyme catalyses alpha-D-glucosamine 6-phosphate + H2O = beta-D-fructose 6-phosphate + NH4(+). The protein operates within amino-sugar metabolism; N-acetylneuraminate degradation; D-fructose 6-phosphate from N-acetylneuraminate: step 5/5. Functionally, catalyzes the reversible isomerization-deamination of glucosamine 6-phosphate (GlcN6P) to form fructose 6-phosphate (Fru6P) and ammonium ion. This is Glucosamine-6-phosphate deaminase from Streptococcus pneumoniae serotype 4 (strain ATCC BAA-334 / TIGR4).